Reading from the N-terminus, the 337-residue chain is Ornithine carbamoyltransferase, catabolic (337 aa).

Carbamoyl phosphate-binding positions include 57-60 (STRT), Q84, R108, and 135-138 (HPTQ). Residues N167, D231, and 235–236 (SM) contribute to the L-ornithine site. Carbamoyl phosphate contacts are provided by residues 272-273 (CL) and R317.

Belongs to the aspartate/ornithine carbamoyltransferase superfamily. OTCase family.

Its subcellular location is the cytoplasm. It carries out the reaction carbamoyl phosphate + L-ornithine = L-citrulline + phosphate + H(+). It functions in the pathway amino-acid degradation; L-arginine degradation via ADI pathway; carbamoyl phosphate from L-arginine: step 2/2. Its function is as follows. Reversibly catalyzes the transfer of the carbamoyl group from carbamoyl phosphate (CP) to the N(epsilon) atom of ornithine (ORN) to produce L-citrulline. This is Ornithine carbamoyltransferase, catabolic (arcB) from Streptococcus agalactiae.